We begin with the raw amino-acid sequence, 424 residues long: MSFPRGSQDRSVGNSSPWWPLTTEGSNGSQEAARLGEGDSPLGDVRNEELAKLEIAVLAVIFVVAVLGNSSVLLALHRTPRKTSRMHLFIRHLSLADLAVAFFQVLPQLCWDITYRFRGPDWLCRVVKHLQVFAMFASAYMLVVMTADRYIAVCHPLKTLQQPARRSRLMIATSWVLSFILSTPQYFIFSVIEIEVNNGTKTQDCWATFIQPWGTRAYVTWMTSGVFVAPVVVLGTCYGFICYHIWRNIRGKTASSRHSKGDKGSGEAVGPFHKGLLVTPCVSSVKSISRAKIRTVKMTFVIVSAYILCWAPFFIVQMWSVWDENFIWTDSENPSITITALLASLNSCCNPWIYMFFSGHLLQDCVQSFPCCHSMAQKFAKDDSDSMSRRQTSYSNNRSPTNSTGMWKDSPKSSKSIRFIPVST.

Residues 1–40 (MSFPRGSQDRSVGNSSPWWPLTTEGSNGSQEAARLGEGDS) form a disordered region. Over 1 to 52 (MSFPRGSQDRSVGNSSPWWPLTTEGSNGSQEAARLGEGDSPLGDVRNEELAK) the chain is Extracellular. A compositionally biased stretch (polar residues) spans 9–30 (DRSVGNSSPWWPLTTEGSNGSQ). Asn-27 carries an N-linked (GlcNAc...) asparagine glycan. The chain crosses the membrane as a helical span at residues 53–76 (LEIAVLAVIFVVAVLGNSSVLLAL). The Cytoplasmic portion of the chain corresponds to 77 to 88 (HRTPRKTSRMHL). A helical transmembrane segment spans residues 89–110 (FIRHLSLADLAVAFFQVLPQLC). Over 111–125 (WDITYRFRGPDWLCR) the chain is Extracellular. A disulfide bridge links Cys-124 with Cys-205. A helical transmembrane segment spans residues 126 to 147 (VVKHLQVFAMFASAYMLVVMTA). The Cytoplasmic portion of the chain corresponds to 148–168 (DRYIAVCHPLKTLQQPARRSR). The chain crosses the membrane as a helical span at residues 169-190 (LMIATSWVLSFILSTPQYFIFS). Residues 191–220 (VIEIEVNNGTKTQDCWATFIQPWGTRAYVT) lie on the Extracellular side of the membrane. Residues 221 to 241 (WMTSGVFVAPVVVLGTCYGFI) form a helical membrane-spanning segment. Residues 242-299 (CYHIWRNIRGKTASSRHSKGDKGSGEAVGPFHKGLLVTPCVSSVKSISRAKIRTVKMT) lie on the Cytoplasmic side of the membrane. A helical transmembrane segment spans residues 300–319 (FVIVSAYILCWAPFFIVQMW). The Extracellular portion of the chain corresponds to 320–337 (SVWDENFIWTDSENPSIT). A helical transmembrane segment spans residues 338–357 (ITALLASLNSCCNPWIYMFF). Over 358 to 424 (SGHLLQDCVQ…KSIRFIPVST (67 aa)) the chain is Cytoplasmic. 2 S-palmitoyl cysteine lipidation sites follow: Cys-371 and Cys-372. Positions 383–416 (DSDSMSRRQTSYSNNRSPTNSTGMWKDSPKSSKS) are disordered. The span at 389–405 (RRQTSYSNNRSPTNSTG) shows a compositional bias: polar residues. Ser-410 carries the post-translational modification Phosphoserine.

This sequence belongs to the G-protein coupled receptor 1 family. Vasopressin/oxytocin receptor subfamily. Post-translationally, palmitoylated on three cysteine residues, of which only two are identified. As to expression, localized within gonadotropes of the anterior pituitary of the brain. Broadly distributed throughout the cerebral cortex.

Its subcellular location is the cell membrane. The protein localises to the cytoplasmic vesicle membrane. Functionally, receptor for arginine vasopressin. The activity of this receptor is mediated by G proteins which activate a phosphatidyl-inositol-calcium second messenger system. Involved in social memory formation. The chain is Vasopressin V1a receptor (Avpr1a) from Rattus norvegicus (Rat).